Consider the following 75-residue polypeptide: OcyC3 (75 aa).

Positions M1–A22 are cleaved as a signal peptide. Residues E51–Q75 constitute a propeptide that is removed on maturation.

Expressed by the venom gland.

It is found in the secreted. The protein resides in the target cell membrane. Amphipathic peptide with probable antimicrobial activity. May act by disrupting the integrity of the bacterial cell membrane. This chain is OcyC3, found in Opisthacanthus cayaporum (South American scorpion).